Here is a 127-residue protein sequence, read N- to C-terminus: Large ribosomal subunit protein bL17 (127 aa).

The protein belongs to the bacterial ribosomal protein bL17 family. In terms of assembly, part of the 50S ribosomal subunit. Contacts protein L32.

In Xanthomonas campestris pv. campestris (strain 8004), this protein is Large ribosomal subunit protein bL17.